We begin with the raw amino-acid sequence, 398 residues long: S-adenosylmethionine synthase (398 aa).

Position 15 (His15) interacts with ATP. Asp17 serves as a coordination point for Mg(2+). Position 43 (Glu43) interacts with K(+). The L-methionine site is built by Glu56 and Gln99. The segment at 99-109 is flexible loop; it reads QSPDIAQGVDT. ATP-binding positions include 175–177, 243–244, Asp252, 258–259, Ala275, and Lys279; these read DGK, RF, and RK. L-methionine is bound at residue Asp252. Lys283 contributes to the L-methionine binding site.

It belongs to the AdoMet synthase family. In terms of assembly, homotetramer; dimer of dimers. Mg(2+) serves as cofactor. It depends on K(+) as a cofactor.

It is found in the cytoplasm. It catalyses the reaction L-methionine + ATP + H2O = S-adenosyl-L-methionine + phosphate + diphosphate. It participates in amino-acid biosynthesis; S-adenosyl-L-methionine biosynthesis; S-adenosyl-L-methionine from L-methionine: step 1/1. Catalyzes the formation of S-adenosylmethionine (AdoMet) from methionine and ATP. The overall synthetic reaction is composed of two sequential steps, AdoMet formation and the subsequent tripolyphosphate hydrolysis which occurs prior to release of AdoMet from the enzyme. The protein is S-adenosylmethionine synthase of Parafrankia sp. (strain EAN1pec).